The chain runs to 259 residues: Imidazole glycerol phosphate synthase subunit HisF (259 aa).

Catalysis depends on residues aspartate 11 and aspartate 130.

It belongs to the HisA/HisF family. As to quaternary structure, heterodimer of HisH and HisF.

It is found in the cytoplasm. The catalysed reaction is 5-[(5-phospho-1-deoxy-D-ribulos-1-ylimino)methylamino]-1-(5-phospho-beta-D-ribosyl)imidazole-4-carboxamide + L-glutamine = D-erythro-1-(imidazol-4-yl)glycerol 3-phosphate + 5-amino-1-(5-phospho-beta-D-ribosyl)imidazole-4-carboxamide + L-glutamate + H(+). The protein operates within amino-acid biosynthesis; L-histidine biosynthesis; L-histidine from 5-phospho-alpha-D-ribose 1-diphosphate: step 5/9. IGPS catalyzes the conversion of PRFAR and glutamine to IGP, AICAR and glutamate. The HisF subunit catalyzes the cyclization activity that produces IGP and AICAR from PRFAR using the ammonia provided by the HisH subunit. The polypeptide is Imidazole glycerol phosphate synthase subunit HisF (Oleidesulfovibrio alaskensis (strain ATCC BAA-1058 / DSM 17464 / G20) (Desulfovibrio alaskensis)).